The chain runs to 321 residues: GDP-L-fucose synthase (321 aa).

Residue 14-20 (GGSGLVG) participates in NADP(+) binding. Y143 acts as the Proton donor/acceptor in catalysis. NADP(+) contacts are provided by residues K147, 170-173 (PTNV), and H186. Positions 194, 208, 215, and 277 each coordinate substrate.

The protein belongs to the NAD(P)-dependent epimerase/dehydratase family. Fucose synthase subfamily. Homodimer.

It carries out the reaction GDP-beta-L-fucose + NADP(+) = GDP-4-dehydro-alpha-D-rhamnose + NADPH + H(+). It participates in nucleotide-sugar biosynthesis; GDP-L-fucose biosynthesis via de novo pathway; GDP-L-fucose from GDP-alpha-D-mannose: step 2/2. In terms of biological role, catalyzes the two-step NADP-dependent conversion of GDP-4-dehydro-6-deoxy-D-mannose to GDP-fucose, involving an epimerase and a reductase reaction. The sequence is that of GDP-L-fucose synthase from Mus musculus (Mouse).